Consider the following 100-residue polypeptide: Large ribosomal subunit protein uL23 (100 aa).

This sequence belongs to the universal ribosomal protein uL23 family. As to quaternary structure, part of the 50S ribosomal subunit. Contacts protein L29, and trigger factor when it is bound to the ribosome.

Its function is as follows. One of the early assembly proteins it binds 23S rRNA. One of the proteins that surrounds the polypeptide exit tunnel on the outside of the ribosome. Forms the main docking site for trigger factor binding to the ribosome. In Vibrio campbellii (strain ATCC BAA-1116), this protein is Large ribosomal subunit protein uL23.